Consider the following 128-residue polypeptide: Glycine cleavage system H protein (128 aa).

The region spanning 25 to 107 (IITVGITHHA…YGAGWFFKLK (83 aa)) is the Lipoyl-binding domain. Lysine 66 carries the N6-lipoyllysine modification.

This sequence belongs to the GcvH family. In terms of assembly, the glycine cleavage system is composed of four proteins: P, T, L and H. (R)-lipoate serves as cofactor.

Functionally, the glycine cleavage system catalyzes the degradation of glycine. The H protein shuttles the methylamine group of glycine from the P protein to the T protein. This is Glycine cleavage system H protein from Neisseria meningitidis serogroup A / serotype 4A (strain DSM 15465 / Z2491).